Here is a 219-residue protein sequence, read N- to C-terminus: Capsid protein (219 aa).

Residues 5 to 29 (RRRRVVRRRKPVRRLRRRRRRFFKR) are nuclear localization signals.

It belongs to the circoviridae capsid protein family. In terms of assembly, homomultimer. Assembles in the nucleus, presumably in an immature form, then migrates to the cytoplasm once assembled as mature virion. Interacts with Rep; this interaction relocates Rep into the nucleus.

The protein localises to the host nucleus. The protein resides in the virion. Self-assembles to form the virion icosahedral capsid with a T=1 symmetry. This very small capsid (17-22 nm in diameter) allows the virus to be very stable in the environment and resistant to some disinfectants, including detergents. Essential for the initial attachment to heparan sulfate moieties and chondroitin sulfate B of the host cell surface proteoglycans. After attachment, the virus is endocytosed and traffics to the nucleus. The capsid protein binds and transports the viral genome and Rep across the nuclear envelope. The polypeptide is Capsid protein (Cap) (Homo sapiens (Human)).